A 124-amino-acid chain; its full sequence is Ribonuclease VapC32 (124 aa).

The 111-residue stretch at 2–112 (ILVDTSVWIE…TRDKRLKAAC (111 aa)) folds into the PINc domain. Positions 5 and 86 each coordinate Mg(2+).

Belongs to the PINc/VapC protein family. Requires Mg(2+) as cofactor.

Toxic component of a type II toxin-antitoxin (TA) system. An RNase. Its toxic effect is neutralized by coexpression with cognate antitoxin VapB32. This is Ribonuclease VapC32 from Mycobacterium tuberculosis (strain CDC 1551 / Oshkosh).